A 322-amino-acid chain; its full sequence is Thymidylate synthase (322 aa).

Residues Arg25 and 184 to 185 (RR) contribute to the dUMP site. Cys204 acts as the Nucleophile in catalysis. DUMP-binding positions include 224-227 (RSGD), Asn235, and 265-267 (HIY). Position 227 (Asp227) interacts with (6R)-5,10-methylene-5,6,7,8-tetrahydrofolate. Ala321 serves as a coordination point for (6R)-5,10-methylene-5,6,7,8-tetrahydrofolate.

Belongs to the thymidylate synthase family. Bacterial-type ThyA subfamily. In terms of assembly, homodimer.

The protein localises to the cytoplasm. The catalysed reaction is dUMP + (6R)-5,10-methylene-5,6,7,8-tetrahydrofolate = 7,8-dihydrofolate + dTMP. The protein operates within pyrimidine metabolism; dTTP biosynthesis. Its function is as follows. Catalyzes the reductive methylation of 2'-deoxyuridine-5'-monophosphate (dUMP) to 2'-deoxythymidine-5'-monophosphate (dTMP) while utilizing 5,10-methylenetetrahydrofolate (mTHF) as the methyl donor and reductant in the reaction, yielding dihydrofolate (DHF) as a by-product. This enzymatic reaction provides an intracellular de novo source of dTMP, an essential precursor for DNA biosynthesis. This Leuconostoc mesenteroides subsp. mesenteroides (strain ATCC 8293 / DSM 20343 / BCRC 11652 / CCM 1803 / JCM 6124 / NCDO 523 / NBRC 100496 / NCIMB 8023 / NCTC 12954 / NRRL B-1118 / 37Y) protein is Thymidylate synthase.